A 334-amino-acid polypeptide reads, in one-letter code: Fructose-1,6-bisphosphatase class 1 (334 aa).

Residues Glu90, Asp113, Leu115, and Asp116 each contribute to the Mg(2+) site. Substrate-binding positions include 116–119, Asn209, Tyr242, and Lys272; that span reads DGSS. Glu278 contributes to the Mg(2+) binding site.

Belongs to the FBPase class 1 family. Homotetramer. Mg(2+) is required as a cofactor.

Its subcellular location is the cytoplasm. It catalyses the reaction beta-D-fructose 1,6-bisphosphate + H2O = beta-D-fructose 6-phosphate + phosphate. The protein operates within carbohydrate biosynthesis; gluconeogenesis. This is Fructose-1,6-bisphosphatase class 1 from Haemophilus ducreyi (strain 35000HP / ATCC 700724).